The sequence spans 304 residues: Type II restriction enzyme LlaDCHI (304 aa).

It belongs to the DpnII type II restriction endonuclease family.

It catalyses the reaction Endonucleolytic cleavage of DNA to give specific double-stranded fragments with terminal 5'-phosphates.. In terms of biological role, a P subtype restriction enzyme that recognizes the double-stranded unmethylated sequence 5'-GATC-3' and cleaves before G-1. In Lactococcus lactis subsp. cremoris (Streptococcus cremoris), this protein is Type II restriction enzyme LlaDCHI (llaDCHIR).